Consider the following 202-residue polypeptide: Glycerol-3-phosphate acyltransferase (202 aa).

Transmembrane regions (helical) follow at residues 2 to 22 (ANLL…AVVV), 85 to 105 (LAMV…HRFA), 119 to 139 (AINP…AFFF), and 158 to 178 (VLME…ILLI).

The protein belongs to the PlsY family. As to quaternary structure, probably interacts with PlsX.

Its subcellular location is the cell inner membrane. It catalyses the reaction an acyl phosphate + sn-glycerol 3-phosphate = a 1-acyl-sn-glycero-3-phosphate + phosphate. The protein operates within lipid metabolism; phospholipid metabolism. Catalyzes the transfer of an acyl group from acyl-phosphate (acyl-PO(4)) to glycerol-3-phosphate (G3P) to form lysophosphatidic acid (LPA). This enzyme utilizes acyl-phosphate as fatty acyl donor, but not acyl-CoA or acyl-ACP. The sequence is that of Glycerol-3-phosphate acyltransferase from Cupriavidus pinatubonensis (strain JMP 134 / LMG 1197) (Cupriavidus necator (strain JMP 134)).